A 391-amino-acid polypeptide reads, in one-letter code: GTPase Obg (391 aa).

The 159-residue stretch at 1–159 folds into the Obg domain; that stretch reads MKFVDEAVVK…REIRLELLLL (159 aa). Residues 160 to 333 enclose the OBG-type G domain; the sequence is ADVGMLGLPN…LCYKLADFME (174 aa). Residues 166–173, 191–195, 213–216, 283–286, and 314–316 contribute to the GTP site; these read GLPNAGKS, FTTLI, DIPG, NKTD, and SAI. Mg(2+)-binding residues include Ser-173 and Thr-193. Acidic residues predominate over residues 367–383; that stretch reads TEEDDDDWDDCDDEDDD. Residues 367-391 are disordered; sequence TEEDDDDWDDCDDEDDDGHVVYVRD.

It belongs to the TRAFAC class OBG-HflX-like GTPase superfamily. OBG GTPase family. As to quaternary structure, monomer. The cofactor is Mg(2+).

Its subcellular location is the cytoplasm. An essential GTPase which binds GTP, GDP and possibly (p)ppGpp with moderate affinity, with high nucleotide exchange rates and a fairly low GTP hydrolysis rate. Plays a role in control of the cell cycle, stress response, ribosome biogenesis and in those bacteria that undergo differentiation, in morphogenesis control. The protein is GTPase Obg of Vibrio campbellii (strain ATCC BAA-1116).